We begin with the raw amino-acid sequence, 397 residues long: Acetate kinase (397 aa).

Position 9 (asparagine 9) interacts with Mg(2+). Lysine 16 contributes to the ATP binding site. Substrate is bound at residue arginine 87. Residue aspartate 144 is the Proton donor/acceptor of the active site. ATP is bound by residues 204-208 (HLGNG), 279-281 (DCR), and 327-331 (GIGEN). Glutamate 381 is a binding site for Mg(2+).

Belongs to the acetokinase family. Homodimer. Mg(2+) serves as cofactor. Mn(2+) is required as a cofactor.

The protein resides in the cytoplasm. It catalyses the reaction acetate + ATP = acetyl phosphate + ADP. Its pathway is metabolic intermediate biosynthesis; acetyl-CoA biosynthesis; acetyl-CoA from acetate: step 1/2. Its function is as follows. Catalyzes the formation of acetyl phosphate from acetate and ATP. Can also catalyze the reverse reaction. This is Acetate kinase from Chromobacterium violaceum (strain ATCC 12472 / DSM 30191 / JCM 1249 / CCUG 213 / NBRC 12614 / NCIMB 9131 / NCTC 9757 / MK).